The chain runs to 92 residues: Phosphoribosyl-ATP pyrophosphatase (92 aa).

This sequence belongs to the PRA-PH family.

It is found in the cytoplasm. It catalyses the reaction 1-(5-phospho-beta-D-ribosyl)-ATP + H2O = 1-(5-phospho-beta-D-ribosyl)-5'-AMP + diphosphate + H(+). The protein operates within amino-acid biosynthesis; L-histidine biosynthesis; L-histidine from 5-phospho-alpha-D-ribose 1-diphosphate: step 2/9. The sequence is that of Phosphoribosyl-ATP pyrophosphatase from Leptospira interrogans serogroup Icterohaemorrhagiae serovar copenhageni (strain Fiocruz L1-130).